The sequence spans 158 residues: NAD(P)H-quinone oxidoreductase subunit J, chloroplastic (158 aa).

The protein belongs to the complex I 30 kDa subunit family. In terms of assembly, NDH is composed of at least 16 different subunits, 5 of which are encoded in the nucleus.

It localises to the plastid. The protein localises to the chloroplast thylakoid membrane. The enzyme catalyses a plastoquinone + NADH + (n+1) H(+)(in) = a plastoquinol + NAD(+) + n H(+)(out). It catalyses the reaction a plastoquinone + NADPH + (n+1) H(+)(in) = a plastoquinol + NADP(+) + n H(+)(out). In terms of biological role, NDH shuttles electrons from NAD(P)H:plastoquinone, via FMN and iron-sulfur (Fe-S) centers, to quinones in the photosynthetic chain and possibly in a chloroplast respiratory chain. The immediate electron acceptor for the enzyme in this species is believed to be plastoquinone. Couples the redox reaction to proton translocation, and thus conserves the redox energy in a proton gradient. The chain is NAD(P)H-quinone oxidoreductase subunit J, chloroplastic from Nicotiana tabacum (Common tobacco).